Consider the following 319-residue polypeptide: Acetyl esterase (319 aa).

The Involved in the stabilization of the negatively charged intermediate by the formation of the oxyanion hole motif lies at His91–Gly93. Active-site residues include Ser165, Asp262, and His292.

This sequence belongs to the 'GDXG' lipolytic enzyme family. In terms of assembly, homodimer. Interacts with MalT and MelA.

It is found in the cytoplasm. Its function is as follows. Displays esterase activity towards short chain fatty esters (acyl chain length of up to 8 carbons). Able to hydrolyze triacetylglycerol (triacetin) and tributyrylglycerol (tributyrin), but not trioleylglycerol (triolein) or cholesterol oleate. Negatively regulates MalT activity by antagonizing maltotriose binding. Inhibits MelA galactosidase activity. This Shigella boydii serotype 4 (strain Sb227) protein is Acetyl esterase.